Here is a 184-residue protein sequence, read N- to C-terminus: UPF0149 protein PputGB1_5261 (184 aa).

This sequence belongs to the UPF0149 family.

The sequence is that of UPF0149 protein PputGB1_5261 from Pseudomonas putida (strain GB-1).